The sequence spans 199 residues: Charged multivesicular body protein 1b (199 aa).

The stretch at aspartate 26 to alanine 48 forms a coiled coil. Residues methionine 132–methionine 156 form an interaction with IST1 region. The tract at residues glutamate 167–valine 199 is disordered. Over residues glutamine 170 to serine 182 the composition is skewed to polar residues. The segment at glycine 174–valine 199 is interaction with SPAST. Positions threonine 178–valine 199 form a coiled coil. Residues valine 180–arginine 196 are interaction with VPS4A, MITD1 and STAMBP. The segment at valine 180–valine 199 is interaction with VTA1. Residues alanine 183–valine 199 form an interaction with VPS4B region. The short motif at aspartate 186–arginine 196 is the MIT-interacting motif element.

The protein belongs to the SNF7 family. In terms of assembly, probable peripherally associated component of the endosomal sorting required for transport complex III (ESCRT-III). ESCRT-III components are thought to multimerize to form a flat lattice on the perimeter membrane of the endosome. Several assembly forms of ESCRT-III may exist that interact and act sequentially. Interacts with CHMP1A. Interacts with VTA1; the interaction probably involves the open conformation of CHMP1B. Interacts with CHMP2A. Interacts with VPS4A; the interaction is direct. Interacts with VPS4B; the interaction is direct. Interacts with SPAST (via MIT domain); the interaction is direct. Interacts with IST1. Interacts with MITD1. Interacts with STAMBP.

The protein localises to the cytoplasm. Its subcellular location is the cytosol. The protein resides in the endosome. It is found in the late endosome membrane. Probable peripherally associated component of the endosomal sorting required for transport complex III (ESCRT-III) which is involved in multivesicular bodies (MVBs) formation and sorting of endosomal cargo proteins into MVBs. MVBs contain intraluminal vesicles (ILVs) that are generated by invagination and scission from the limiting membrane of the endosome and mostly are delivered to lysosomes enabling degradation of membrane proteins, such as stimulated growth factor receptors, lysosomal enzymes and lipids. The MVB pathway appears to require the sequential function of ESCRT-O, -I,-II and -III complexes. ESCRT-III proteins mostly dissociate from the invaginating membrane before the ILV is released. The ESCRT machinery also functions in topologically equivalent membrane fission events, such as the terminal stages of cytokinesis and the budding of enveloped viruses (lentiviruses). ESCRT-III proteins are believed to mediate the necessary vesicle extrusion and/or membrane fission activities, possibly in conjunction with the AAA ATPase VPS4. Involved in cytokinesis. Involved in recruiting VPS4A and/or VPS4B and SPAST to the midbody of dividing cells. The sequence is that of Charged multivesicular body protein 1b (CHMP1B) from Bos taurus (Bovine).